The sequence spans 335 residues: MELTLEGDVVRAGYEARERFYDSRGYGKVRNGDIDLAPVEAAHLLYRGDIESIDGMDFRGFLGSAAVSEVDFAVYKDLRDRGFYLTPAREGWVDDAAGADFVVYPRGKGPWDNEVAYRVRIIGERDTAVATDLGGCVLAVVDEESEVTYLDTDRREVSGTSDAAVPATAGELLGERVVCWEPPAELYEQAFYGQQLGDDGAVQLSLVEAAYLTQEGMLTVEGGADAVVERGREVEGDRFDRRLAVYTALRASGVAPKTGFKFGADFRTYADVESAENLGHSELLVRVLPADHRFEPRDLALDVRLAHGVRKTMVFALTTDGGDEIEWVAVERLTP.

Active-site residues include Y269, H280, and K311.

It belongs to the tRNA-intron endonuclease family. Archaeal long subfamily. In terms of assembly, homodimer.

The catalysed reaction is pretRNA = a 3'-half-tRNA molecule with a 5'-OH end + a 5'-half-tRNA molecule with a 2',3'-cyclic phosphate end + an intron with a 2',3'-cyclic phosphate and a 5'-hydroxyl terminus.. Functionally, endonuclease that removes tRNA introns. Cleaves pre-tRNA at the 5'- and 3'-splice sites to release the intron. The products are an intron and two tRNA half-molecules bearing 2',3' cyclic phosphate and 5'-OH termini. Recognizes a pseudosymmetric substrate in which 2 bulged loops of 3 bases are separated by a stem of 4 bp. The protein is tRNA-splicing endonuclease of Haloarcula marismortui (strain ATCC 43049 / DSM 3752 / JCM 8966 / VKM B-1809) (Halobacterium marismortui).